A 211-amino-acid chain; its full sequence is Large ribosomal subunit protein uL3 (211 aa).

Positions 130-139 are enriched in polar residues; it reads QDATHGNSLS. Residues 130-151 form a disordered region; it reads QDATHGNSLSHRAPGSIGQNQT. The residue at position 150 (Gln150) is an N5-methylglutamine.

Belongs to the universal ribosomal protein uL3 family. Part of the 50S ribosomal subunit. Forms a cluster with proteins L14 and L19. In terms of processing, methylated by PrmB.

Functionally, one of the primary rRNA binding proteins, it binds directly near the 3'-end of the 23S rRNA, where it nucleates assembly of the 50S subunit. The protein is Large ribosomal subunit protein uL3 of Alcanivorax borkumensis (strain ATCC 700651 / DSM 11573 / NCIMB 13689 / SK2).